We begin with the raw amino-acid sequence, 669 residues long: tRNA 5-methylaminomethyl-2-thiouridine biosynthesis bifunctional protein MnmC (669 aa).

The tRNA (mnm(5)s(2)U34)-methyltransferase stretch occupies residues 1–246 (MIKNANIHFN…KRSMLIGTLK (246 aa)). The segment at 271 to 669 (IGGGIASSCI…IVRDLIRNKI (399 aa)) is FAD-dependent cmnm(5)s(2)U34 oxidoreductase.

It in the N-terminal section; belongs to the methyltransferase superfamily. tRNA (mnm(5)s(2)U34)-methyltransferase family. This sequence in the C-terminal section; belongs to the DAO family. FAD serves as cofactor.

It is found in the cytoplasm. The catalysed reaction is 5-aminomethyl-2-thiouridine(34) in tRNA + S-adenosyl-L-methionine = 5-methylaminomethyl-2-thiouridine(34) in tRNA + S-adenosyl-L-homocysteine + H(+). In terms of biological role, catalyzes the last two steps in the biosynthesis of 5-methylaminomethyl-2-thiouridine (mnm(5)s(2)U) at the wobble position (U34) in tRNA. Catalyzes the FAD-dependent demodification of cmnm(5)s(2)U34 to nm(5)s(2)U34, followed by the transfer of a methyl group from S-adenosyl-L-methionine to nm(5)s(2)U34, to form mnm(5)s(2)U34. The sequence is that of tRNA 5-methylaminomethyl-2-thiouridine biosynthesis bifunctional protein MnmC from Pseudoalteromonas translucida (strain TAC 125).